Reading from the N-terminus, the 1376-residue chain is DNA-directed RNA polymerase subunit beta'' (1376 aa).

Residues C221, C290, C297, and C300 each contribute to the Zn(2+) site. The disordered stretch occupies residues 895 to 919 (PSGSGFPSDNELDHSNRNPFSSSYP).

Belongs to the RNA polymerase beta' chain family. RpoC2 subfamily. In plastids the minimal PEP RNA polymerase catalytic core is composed of four subunits: alpha, beta, beta', and beta''. When a (nuclear-encoded) sigma factor is associated with the core the holoenzyme is formed, which can initiate transcription. Zn(2+) is required as a cofactor.

The protein resides in the plastid. The protein localises to the chloroplast. It carries out the reaction RNA(n) + a ribonucleoside 5'-triphosphate = RNA(n+1) + diphosphate. Functionally, DNA-dependent RNA polymerase catalyzes the transcription of DNA into RNA using the four ribonucleoside triphosphates as substrates. The chain is DNA-directed RNA polymerase subunit beta'' from Pelargonium hortorum (Common geranium).